Here is a 116-residue protein sequence, read N- to C-terminus: Fluoride-specific ion channel FluC 1 (116 aa).

The next 4 membrane-spanning stretches (helical) occupy residues 1 to 21 (MGKL…RYTV), 31 to 51 (IPAG…FLTF), 58 to 78 (MVYL…TFAY), and 92 to 112 (FFLN…IAYL). Residues Gly-68 and Thr-71 each coordinate Na(+).

This sequence belongs to the fluoride channel Fluc/FEX (TC 1.A.43) family.

The protein resides in the cell membrane. The catalysed reaction is fluoride(in) = fluoride(out). Na(+) is not transported, but it plays an essential structural role and its presence is essential for fluoride channel function. Functionally, fluoride-specific ion channel. Important for reducing fluoride concentration in the cell, thus reducing its toxicity. The sequence is that of Fluoride-specific ion channel FluC 1 from Methanosarcina barkeri (strain Fusaro / DSM 804).